An 876-amino-acid polypeptide reads, in one-letter code: Leucine--tRNA ligase (876 aa).

A 'HIGH' region motif is present at residues 42-52 (PYPSGKLHMGH). The short motif at 634-638 (KMSKS) is the 'KMSKS' region element. Residue lysine 637 participates in ATP binding.

Belongs to the class-I aminoacyl-tRNA synthetase family.

It is found in the cytoplasm. It catalyses the reaction tRNA(Leu) + L-leucine + ATP = L-leucyl-tRNA(Leu) + AMP + diphosphate. The sequence is that of Leucine--tRNA ligase from Neisseria gonorrhoeae (strain ATCC 700825 / FA 1090).